We begin with the raw amino-acid sequence, 555 residues long: ATP-dependent RNA helicase MRH4, mitochondrial (555 aa).

The transit peptide at 1–25 directs the protein to the mitochondrion; it reads MFKLLIPNKYNYVIRPLVRFKSIKS. The short motif at 101 to 108 is the Q motif element; that stretch reads DIKPTPVQ. In terms of domain architecture, Helicase ATP-binding spans 144–361; sequence ANEIQKTKVF…SKLFPDQRSL (218 aa). Residue 157 to 164 coordinates ATP; sequence AETGSGKT. The short motif at 309–312 is the DEAD box element; sequence DEAD. One can recognise a Helicase C-terminal domain in the interval 395-555; it reads CLAQALYAIS…NAIIRGLRIG (161 aa).

Belongs to the DEAD box helicase family. MRH4 subfamily.

The protein localises to the mitochondrion. The catalysed reaction is ATP + H2O = ADP + phosphate + H(+). In terms of biological role, ATP-binding RNA helicase involved in mitochondrial RNA metabolism. Required for maintenance of mitochondrial DNA. This Candida albicans (strain SC5314 / ATCC MYA-2876) (Yeast) protein is ATP-dependent RNA helicase MRH4, mitochondrial (MRH4).